Consider the following 47-residue polypeptide: Defensin-2 (47 aa).

Intrachain disulfides connect C3-C47, C14-C35, C20-C41, and C24-C43.

The protein belongs to the DEFL family. As to expression, epidermis and vascular bundles of pods, stems, roots, leaves and wet or dry seeds.

In terms of biological role, possesses antifungal activity sensitive to inorganic cations. This Pisum sativum (Garden pea) protein is Defensin-2.